A 362-amino-acid polypeptide reads, in one-letter code: Divinyl chlorophyll a/b light-harvesting protein PcbF (362 aa).

6 helical membrane passes run F27–L47, I89–L109, F150–A170, V211–A231, A251–C271, and L316–I336.

It belongs to the PsbB/PsbC family. IsiA/Pcb subfamily. In terms of assembly, the antenna complex consists of divinyl chlorophylls (a and b) and divinyl chlorophyll a/b binding proteins and binds more divinyl chlorophyll b than does the antenna complex from high-light-adapted Prochlorococcus. Requires divinyl chlorophyll a as cofactor. The cofactor is divinyl chlorophyll b.

It localises to the cellular thylakoid membrane. In terms of biological role, the antenna complex functions as a light receptor, it captures and delivers excitation energy to photosystems II and I. The Prochlorales pcb genes are not related to higher plant LHCs. The polypeptide is Divinyl chlorophyll a/b light-harvesting protein PcbF (pcbF) (Prochlorococcus marinus (strain NATL2A)).